A 311-amino-acid chain; its full sequence is tRNA dimethylallyltransferase (311 aa).

Residue 10 to 17 (GPTAVGKT) participates in ATP binding. 12–17 (TAVGKT) lines the substrate pocket. The interval 35 to 38 (DSMQ) is interaction with substrate tRNA.

Belongs to the IPP transferase family. In terms of assembly, monomer. The cofactor is Mg(2+).

It carries out the reaction adenosine(37) in tRNA + dimethylallyl diphosphate = N(6)-dimethylallyladenosine(37) in tRNA + diphosphate. In terms of biological role, catalyzes the transfer of a dimethylallyl group onto the adenine at position 37 in tRNAs that read codons beginning with uridine, leading to the formation of N6-(dimethylallyl)adenosine (i(6)A). This chain is tRNA dimethylallyltransferase, found in Anoxybacillus flavithermus (strain DSM 21510 / WK1).